A 384-amino-acid polypeptide reads, in one-letter code: FAD-dependent urate hydroxylase (384 aa).

Residues Gly-11, 30-31 (EA), Ser-43, and Val-125 each bind FAD. Substrate contacts are provided by residues Asn-178, Arg-204, and 216–218 (YFF). FAD contacts are provided by residues Asp-285 and 295-299 (GQGGC).

The protein belongs to the FAD-dependent urate hydroxylase family. The cofactor is FAD.

It catalyses the reaction urate + NADH + O2 + H(+) = 5-hydroxyisourate + NAD(+) + H2O. Its pathway is purine metabolism; urate degradation. Catalyzes the hydroxylation of uric acid to 5-hydroxyisourate. The chain is FAD-dependent urate hydroxylase (hpxO) from Klebsiella oxytoca.